A 124-amino-acid polypeptide reads, in one-letter code: Large ribosomal subunit protein uL29 (124 aa).

It belongs to the universal ribosomal protein uL29 family.

This chain is Large ribosomal subunit protein uL29 (RPL35), found in Triticum aestivum (Wheat).